The chain runs to 200 residues: RNA-binding protein with multiple splicing 2 (200 aa).

One can recognise an RRM domain in the interval 22–99; it reads RTLFVSGLPV…QTLRLEFAKA (78 aa). Residues 32-42 are important for homodimerization; it reads DIKPRELYLLF.

Homodimer. Expressed in developing heart.

The protein resides in the cytoplasm. Its subcellular location is the nucleus. It localises to the stress granule. Its function is as follows. RNA-binding protein involved in the regulation of smooth muscle cell differentiation and proliferation in the gastrointestinal system. Binds NOG mRNA, the major inhibitor of the bone morphogenetic protein (BMP) pathway. Mediates an increase of NOG mRNA levels, thereby contributing to the negative regulation of BMP signaling pathway and promoting reversible dedifferentiation and proliferation of smooth muscle cells. Acts as a pre-mRNA alternative splicing regulator. Mediates ACTN1 and FLNB alternative splicing. Likely binds to mRNA tandem CAC trinucleotide or CA dinucleotide motifs. In Gallus gallus (Chicken), this protein is RNA-binding protein with multiple splicing 2.